The chain runs to 752 residues: Microtubule-associated protein tau (752 aa).

The disordered stretch occupies residues M1 to V567. N-acetylalanine is present on A2. At Y18 the chain carries Phosphotyrosine. A Glycyl lysine isopeptide (Lys-Gly) (interchain with G-Cter in ubiquitin) cross-link involves residue K33. S35 and S50 each carry phosphoserine. Positions S50–T60 are enriched in polar residues. Phosphothreonine is present on residues T58, T60, and T100. Residues S142–S151 show a composition bias toward polar residues. Positions R173–P182 are enriched in basic and acidic residues. Residues S191 and S204 each carry the phosphoserine modification. A compositionally biased stretch (basic and acidic residues) spans P192 to S204. The segment covering E205–S218 has biased composition (acidic residues). Positions Q219–A229 are enriched in low complexity. Positions A233–I252 are enriched in polar residues. 2 stretches are compositionally biased toward basic and acidic residues: residues E289–D313 and S374–A385. Composition is skewed to polar residues over residues T387–P400 and K432–T446. T464 is modified (phosphothreonine). Omega-N-methylarginine is present on R466. An N6,N6-dimethyllysine; alternate modification is found at K474. The residue at position 474 (K474) is an N6-acetyllysine; alternate. Phosphothreonine is present on residues T480, T486, and T487. A Phosphoserine modification is found at S489. T492 bears the Phosphothreonine mark. Phosphoserine is present on residues S496, S502, and S506. Over residues E498–S525 the composition is skewed to low complexity. At Y508 the chain carries Phosphotyrosine. S509 and S510 each carry phosphoserine. S513 carries the phosphoserine; by CK1, PDPK1 and TTBK1 modification. Phosphothreonine occurs at positions 516 and 523. S525 is modified (phosphoserine). T528 carries the post-translational modification Phosphothreonine. K536 is subject to N6-acetyllysine. Position 542 is a phosphothreonine (T542). Phosphoserine occurs at positions 546 and 548. Tau/MAP repeat units follow at residues Q555–K585, V586–S616, V617–Q647, and V648–N679. A Glycyl lysine isopeptide (Lys-Gly) (interchain with G-Cter in ubiquitin) cross-link involves residue K565. Position 570 is an N6-acetyllysine; alternate (K570). K570 is modified (N6-methyllysine; alternate). Residue K570 forms a Glycyl lysine isopeptide (Lys-Gly) (interchain with G-Cter in ubiquitin); alternate linkage. The residue at position 573 (S573) is a Phosphoserine. K578 is covalently cross-linked (Glycyl lysine isopeptide (Lys-Gly) (interchain with G-Cter in ubiquitin)). N6-acetyllysine; alternate is present on K592. K592 is covalently cross-linked (Glycyl lysine isopeptide (Lys-Gly) (interchain with G-Cter in ubiquitin); alternate). Phosphoserine occurs at positions 596 and 600. Position 601 is an N6-acetyllysine (K601). C602 and C633 form a disulfide bridge. S604 carries the post-translational modification Phosphoserine. Position 609 is an N6-acetyllysine; alternate (K609). K609 participates in a covalent cross-link: Glycyl lysine isopeptide (Lys-Gly) (interchain with G-Cter in ubiquitin); alternate. The residue at position 616 (S616) is a Phosphoserine. The residue at position 622 (K622) is an N6,N6-dimethyllysine; alternate. N6-acetyllysine; alternate occurs at positions 622, 628, and 632. Glycyl lysine isopeptide (Lys-Gly) (interchain with G-Cter in ubiquitin); alternate cross-links involve residues K622, K628, and K632. Phosphoserine is present on S635. Residues K642, K654, and K658 each carry the N6-acetyllysine; alternate modification. Residues K642, K654, and K658 each participate in a glycyl lysine isopeptide (Lys-Gly) (interchain with G-Cter in ubiquitin); alternate cross-link. R660 bears the Omega-N-methylarginine mark. Position 663 is a phosphoserine (S663). K664 participates in a covalent cross-link: Glycyl lysine isopeptide (Lys-Gly) (interchain with G-Cter in ubiquitin). S667 carries the phosphoserine modification. K680 is modified (N6-acetyllysine; alternate). A Glycyl lysine isopeptide (Lys-Gly) (interchain with G-Cter in ubiquitin); alternate cross-link involves residue K680. K686 participates in a covalent cross-link: Glycyl lysine isopeptide (Lys-Gly) (interchain with G-Cter in ubiquitin). K696 carries the N6-acetyllysine; alternate modification. Residue K696 forms a Glycyl lysine isopeptide (Lys-Gly) (interchain with G-Cter in ubiquitin); alternate linkage. At Y705 the chain carries Phosphotyrosine. A Phosphoserine; by CK1 and PDPK1 modification is found at S707. The residue at position 711 (S711) is a Phosphoserine. Position 714 is a phosphothreonine (T714). S715 carries the post-translational modification Phosphoserine; by CK1 and PDPK1. S720, S727, and S733 each carry phosphoserine. Position 738 is a phosphothreonine (T738).

In terms of assembly, interacts with MARK1, MARK2, MARK3 and MARK4. Interacts with SQSTM1 when polyubiquitinated. Interacts with PSMC2 through SQSTM1. Interacts with FKBP4. Binds to CSNK1D. Interacts with SGK1. Interacts with EPM2A; the interaction dephosphorylates MAPT at Ser-388. Interacts with PIN1. Interacts with LRRK2. Interacts with LRP1, leading to endocytosis; this interaction is reduced in the presence of LRPAP1/RAP. Polyubiquitinated. Requires functional TRAF6 and may provoke SQSTM1-dependent degradation by the proteasome. Post-translationally, phosphorylated at various serine and threonine residues in S-P or T-P motifs by proline-directed protein kinases (PDPK1, CDK1, CDK5, GSK3, MAPK) (a few sites per protein in interphase, more in mitosis), and at serine residues in K-X-G-S motifs by MAP/microtubule affinity-regulating kinase (MARK1, MARK2, MARK3, MARK4), causing detachment from microtubules, and their disassembly. Fetal Tau is much more phosphorylated than adult Tau. Phosphorylation at Ser-573 by BRSK1 and BRSK2 in neurons affects ability to bind microtubules and plays a role in neuron polarization. Phosphorylated by PHK. Dephosphorylation at several serine and threonine residues by the serine/threonine phosphatase PPP5C. Phosphorylation at Ser-204 by SGK1 mediates microtubule depolymerization and neurite formation in hippocampal neurons. As to expression, expressed in neurons. The larger forms (isoform tau-A and isoform tau-B) are preferentially expressed in the peripheral nervous system while the other are expressed in the central nervous system. Low amounts of the larger forms are also found in limited areas of the CNS.

It localises to the cytoplasm. The protein resides in the cytosol. It is found in the cell membrane. Its subcellular location is the cytoskeleton. The protein localises to the cell projection. It localises to the axon. The protein resides in the dendrite. It is found in the secreted. Promotes microtubule assembly and stability, and might be involved in the establishment and maintenance of neuronal polarity. The C-terminus binds axonal microtubules while the N-terminus binds neural plasma membrane components, suggesting that tau functions as a linker protein between both. Axonal polarity is predetermined by tau localization (in the neuronal cell) in the domain of the cell body defined by the centrosome. The short isoforms allow plasticity of the cytoskeleton whereas the longer isoforms may preferentially play a role in its stabilization. The sequence is that of Microtubule-associated protein tau from Rattus norvegicus (Rat).